We begin with the raw amino-acid sequence, 564 residues long: Proline--tRNA ligase 1 (564 aa).

The protein belongs to the class-II aminoacyl-tRNA synthetase family. ProS type 1 subfamily. In terms of assembly, homodimer.

It localises to the cytoplasm. The enzyme catalyses tRNA(Pro) + L-proline + ATP = L-prolyl-tRNA(Pro) + AMP + diphosphate. Functionally, catalyzes the attachment of proline to tRNA(Pro) in a two-step reaction: proline is first activated by ATP to form Pro-AMP and then transferred to the acceptor end of tRNA(Pro). As ProRS can inadvertently accommodate and process non-cognate amino acids such as alanine and cysteine, to avoid such errors it has two additional distinct editing activities against alanine. One activity is designated as 'pretransfer' editing and involves the tRNA(Pro)-independent hydrolysis of activated Ala-AMP. The other activity is designated 'posttransfer' editing and involves deacylation of mischarged Ala-tRNA(Pro). The misacylated Cys-tRNA(Pro) is not edited by ProRS. This chain is Proline--tRNA ligase 1, found in Streptomyces avermitilis (strain ATCC 31267 / DSM 46492 / JCM 5070 / NBRC 14893 / NCIMB 12804 / NRRL 8165 / MA-4680).